The chain runs to 111 residues: Exocrine gland-secreted peptide 22 (111 aa).

The N-terminal stretch at 1 to 24 (MNSVPVMLFSISILLAAMLTEGRG) is a signal peptide.

It belongs to the exocrine gland-secreted peptide family. In terms of tissue distribution, expressed in acinar cells of the lacrimal gland from where it is secreted into tears. Not detected in a range of other tissues tested including other exocrine glands, internal organs and sensory epithelia.

It localises to the secreted. Functionally, pheromone produced by juveniles which activates a small number of vomeronasal organ sensory neurons and exhibits a powerful inhibitory effect on adult male mating behavior. The polypeptide is Exocrine gland-secreted peptide 22 (Mus musculus (Mouse)).